Consider the following 493-residue polypeptide: Glutamate--tRNA ligase (493 aa).

The 'HIGH' region signature appears at 10–20 (PSPTGDPHVGT). The 'KMSKS' region motif lies at 251 to 255 (KLSKR). Lys254 contributes to the ATP binding site.

Belongs to the class-I aminoacyl-tRNA synthetase family. Glutamate--tRNA ligase type 1 subfamily. As to quaternary structure, monomer.

The protein resides in the cytoplasm. It catalyses the reaction tRNA(Glu) + L-glutamate + ATP = L-glutamyl-tRNA(Glu) + AMP + diphosphate. In terms of biological role, catalyzes the attachment of glutamate to tRNA(Glu) in a two-step reaction: glutamate is first activated by ATP to form Glu-AMP and then transferred to the acceptor end of tRNA(Glu). This Pseudomonas fluorescens (strain Pf0-1) protein is Glutamate--tRNA ligase.